The chain runs to 102 residues: NADH-quinone oxidoreductase subunit K (102 aa).

3 helical membrane passes run 5–25, 31–51, and 62–82; these read LGHY…GIFL, IVLL…FVAF, and VFVF…LAIL.

The protein belongs to the complex I subunit 4L family. NDH-1 is composed of 14 different subunits. Subunits NuoA, H, J, K, L, M, N constitute the membrane sector of the complex.

It localises to the cell inner membrane. The catalysed reaction is a quinone + NADH + 5 H(+)(in) = a quinol + NAD(+) + 4 H(+)(out). NDH-1 shuttles electrons from NADH, via FMN and iron-sulfur (Fe-S) centers, to quinones in the respiratory chain. The immediate electron acceptor for the enzyme in this species is believed to be ubiquinone. Couples the redox reaction to proton translocation (for every two electrons transferred, four hydrogen ions are translocated across the cytoplasmic membrane), and thus conserves the redox energy in a proton gradient. The polypeptide is NADH-quinone oxidoreductase subunit K (Methylibium petroleiphilum (strain ATCC BAA-1232 / LMG 22953 / PM1)).